We begin with the raw amino-acid sequence, 376 residues long: Crh-like protein 4 (376 aa).

A signal peptide spans Met1–Ala21. One can recognise a GH16 domain in the interval Gln22–Asn229. An intrachain disulfide couples Cys27 to Cys35. Residue Glu119 is the Nucleophile of the active site. Glu123 (proton donor) is an active-site residue. Chitin contacts are provided by Glu123, Lys202, Trp206, and Thr217. Ser346 is lipidated: GPI-anchor amidated serine. Residues Ala347–Pro376 constitute a propeptide, removed in mature form. Asn351 carries an N-linked (GlcNAc...) asparagine glycan.

The protein belongs to the glycosyl hydrolase 16 family. CRH1 subfamily.

It localises to the cell membrane. The catalysed reaction is Random endo-hydrolysis of N-acetyl-beta-D-glucosaminide (1-&gt;4)-beta-linkages in chitin and chitodextrins.. Dual chitinase/transglycosylase that plays a role in cell wall architecture. Chitinase and transglycosylase activities are coupled. Required for the polysaccharide cross-linking at the septa and the cell wall. More specifically, transfers chitin to 1,6-beta-glucan in the cell wall. In Botryotinia fuckeliana (strain B05.10) (Noble rot fungus), this protein is Crh-like protein 4.